The following is a 246-amino-acid chain: tRNA (guanine-N(1)-)-methyltransferase (246 aa).

S-adenosyl-L-methionine contacts are provided by residues glycine 117 and 137–142 (IGDYVL).

This sequence belongs to the RNA methyltransferase TrmD family. Homodimer.

The protein resides in the cytoplasm. It carries out the reaction guanosine(37) in tRNA + S-adenosyl-L-methionine = N(1)-methylguanosine(37) in tRNA + S-adenosyl-L-homocysteine + H(+). Functionally, specifically methylates guanosine-37 in various tRNAs. The protein is tRNA (guanine-N(1)-)-methyltransferase of Acinetobacter baumannii (strain AB307-0294).